We begin with the raw amino-acid sequence, 129 residues long: Glycine cleavage system H protein (129 aa).

Positions 24–106 (LLKIGVSEFA…IGDGWLVILK (83 aa)) constitute a Lipoyl-binding domain. Position 65 is an N6-lipoyllysine (K65).

Belongs to the GcvH family. The glycine cleavage system is composed of four proteins: P, T, L and H. The cofactor is (R)-lipoate.

Functionally, the glycine cleavage system catalyzes the degradation of glycine. The H protein shuttles the methylamine group of glycine from the P protein to the T protein. The chain is Glycine cleavage system H protein from Prochlorococcus marinus (strain MIT 9301).